The sequence spans 576 residues: Kinetochore-associated protein DSN1 (576 aa).

A compositionally biased stretch (polar residues) spans 1 to 11 (MSLEPTQTVSG). Disordered regions lie at residues 1–22 (MSLE…RTHK), 35–64 (LESD…NKQS), 185–205 (YSQP…ISSS), and 227–246 (QPHY…SQRG). The span at 235–246 (RERKKSIGSQRG) shows a compositional bias: basic residues. S250 is modified (phosphoserine). Residues 412 to 437 (RSRRKFSERRKALPKEPKKLLPNSKN) form a disordered region. The segment covering 420-430 (RRKALPKEPKK) has biased composition (basic and acidic residues).

As to quaternary structure, component of the MIND kinetochore complex, which is composed of at least MTW1, NNF1, NSL1 and DSN1. Interacts with NSL1.

Its subcellular location is the nucleus. It is found in the chromosome. The protein resides in the centromere. The protein localises to the kinetochore. Its function is as follows. Acts as an essential component of the kinetochore MIND complex, which is required for the spindle checkpoint and kinetochore integrity. MIND plays a role in establishing a bipolar spindle-kinetochore interaction by joining kinetochore subunits contacting DNA to those contacting microtubules. The sequence is that of Kinetochore-associated protein DSN1 (DSN1) from Saccharomyces cerevisiae (strain ATCC 204508 / S288c) (Baker's yeast).